We begin with the raw amino-acid sequence, 182 residues long: Flagellar transcriptional regulator FlhC (182 aa).

Residues Cys-138, Cys-141, Cys-158, and Cys-161 each contribute to the Zn(2+) site.

This sequence belongs to the FlhC family. Heterohexamer composed of two FlhC and four FlhD subunits. Each FlhC binds a FlhD dimer, forming a heterotrimer, and a hexamer assembles by dimerization of two heterotrimers. Zn(2+) is required as a cofactor.

Its subcellular location is the cytoplasm. Functionally, functions in complex with FlhD as a master transcriptional regulator that regulates transcription of several flagellar and non-flagellar operons by binding to their promoter region. Activates expression of class 2 flagellar genes, including fliA, which is a flagellum-specific sigma factor that turns on the class 3 genes. Also regulates genes whose products function in a variety of physiological pathways. The sequence is that of Flagellar transcriptional regulator FlhC from Gallionella capsiferriformans (strain ES-2) (Gallionella ferruginea capsiferriformans (strain ES-2)).